The following is an 800-amino-acid chain: DNA mismatch repair protein MutS (800 aa).

Residue 616–623 participates in ATP binding; sequence GPNMGGKS.

It belongs to the DNA mismatch repair MutS family.

In terms of biological role, this protein is involved in the repair of mismatches in DNA. It is possible that it carries out the mismatch recognition step. This protein has a weak ATPase activity. The polypeptide is DNA mismatch repair protein MutS (Buchnera aphidicola subsp. Baizongia pistaciae (strain Bp)).